The sequence spans 470 residues: MKSAVENLEPTRVKLTVEVAFDELKASLDHAYQHIAQQVNVPGFRKGKVPPRVIDQRVGRAAVVEHAVNDALPDFYRQAVTESELKVLGQPEVEVTGVPDTTSGELTFTAEVDVRPDFTLPALADLELEVDDVAVTDDDVAERLDLLRQRYGTLTGVDRAAETGDYVVIDMTATIDGEEVDTVSGVSYEIGSGNMLDGLDEALVGLAADETATFSAPLAGGDRAGEAADVSVTVTAVKVQELPEADDDFAQLASEFDTLEELQADLRTQISDAKVNNQAVQARDRLLEKLVEATDFPLPQGVIEAEIHRHLESEGRLEDDEHREEVREEATQALRRQLVLDVLADQVSVQVNQNELVEFLLRTAQQYRVDPNEFITNADKTGQIPSFVAELARNKSLAVALRDVRVVDASGNAVDLTSFIGSEETDAEDAAEGVESVEVDLSAAAEDDAEETSDEPAAEDTATEDEAAKA.

One can recognise a PPIase FKBP-type domain in the interval 164-243 (GDYVVIDMTA…VTAVKVQELP (80 aa)). 2 stretches are compositionally biased toward acidic residues: residues 424 to 438 (ETDAEDAAEGVESVE) and 445 to 470 (AEDDAEETSDEPAAEDTATEDEAAKA). A disordered region spans residues 424-470 (ETDAEDAAEGVESVEVDLSAAAEDDAEETSDEPAAEDTATEDEAAKA).

This sequence belongs to the FKBP-type PPIase family. Tig subfamily.

Its subcellular location is the cytoplasm. It carries out the reaction [protein]-peptidylproline (omega=180) = [protein]-peptidylproline (omega=0). Its function is as follows. Involved in protein export. Acts as a chaperone by maintaining the newly synthesized protein in an open conformation. Functions as a peptidyl-prolyl cis-trans isomerase. The protein is Trigger factor of Beutenbergia cavernae (strain ATCC BAA-8 / DSM 12333 / CCUG 43141 / JCM 11478 / NBRC 16432 / NCIMB 13614 / HKI 0122).